The chain runs to 142 residues: Large ribosomal subunit protein uL11 (142 aa).

Belongs to the universal ribosomal protein uL11 family. Part of the ribosomal stalk of the 50S ribosomal subunit. Interacts with L10 and the large rRNA to form the base of the stalk. L10 forms an elongated spine to which L12 dimers bind in a sequential fashion forming a multimeric L10(L12)X complex. Post-translationally, one or more lysine residues are methylated.

In terms of biological role, forms part of the ribosomal stalk which helps the ribosome interact with GTP-bound translation factors. The polypeptide is Large ribosomal subunit protein uL11 (Vesicomyosocius okutanii subsp. Calyptogena okutanii (strain HA)).